The chain runs to 223 residues: Neurotrophic factor BDNF precursor form (223 aa).

The first 5 residues, Ser1–Ala5, serve as a signal peptide directing secretion. A propeptide spanning residues Ala6–Arg114 is cleaved from the precursor. Residue Asn107 is glycosylated (N-linked (GlcNAc...) asparagine). 2 cysteine pairs are disulfide-bonded: Cys127–Cys194 and Cys172–Cys223.

It belongs to the NGF-beta family.

Its subcellular location is the secreted. Promotes the survival of neuronal populations that are all located either in the central nervous system or directly connected to it. The protein is Neurotrophic factor BDNF precursor form (BDNF) of Candoia carinata (Papuan tree boa).